The sequence spans 289 residues: Oxaloacetate decarboxylase (289 aa).

Position 50 (S50) interacts with substrate. D88 is a binding site for Mg(2+). The substrate site is built by R159 and H235.

It belongs to the isocitrate lyase/PEP mutase superfamily. Oxaloacetate decarboxylase family. Homotetramer; dimer of dimers. It depends on Mg(2+) as a cofactor.

The catalysed reaction is oxaloacetate + H(+) = pyruvate + CO2. In terms of biological role, catalyzes the decarboxylation of oxaloacetate into pyruvate. Seems to play a role in maintaining cellular concentrations of bicarbonate and pyruvate. This is Oxaloacetate decarboxylase from Pseudomonas savastanoi pv. phaseolicola (strain 1448A / Race 6) (Pseudomonas syringae pv. phaseolicola (strain 1448A / Race 6)).